A 305-amino-acid polypeptide reads, in one-letter code: Sulfate adenylyltransferase subunit 2 (305 aa).

The protein belongs to the PAPS reductase family. CysD subfamily. In terms of assembly, heterodimer composed of CysD, the smaller subunit, and CysN.

It catalyses the reaction sulfate + ATP + H(+) = adenosine 5'-phosphosulfate + diphosphate. It participates in sulfur metabolism; hydrogen sulfide biosynthesis; sulfite from sulfate: step 1/3. With CysN forms the ATP sulfurylase (ATPS) that catalyzes the adenylation of sulfate producing adenosine 5'-phosphosulfate (APS) and diphosphate, the first enzymatic step in sulfur assimilation pathway. APS synthesis involves the formation of a high-energy phosphoric-sulfuric acid anhydride bond driven by GTP hydrolysis by CysN coupled to ATP hydrolysis by CysD. The polypeptide is Sulfate adenylyltransferase subunit 2 (Stutzerimonas stutzeri (strain A1501) (Pseudomonas stutzeri)).